The following is an 85-amino-acid chain: Type 3 secretion system needle filament protein (85 aa).

Residues 13 to 41 (LDTVANALKEQANAANKDVNDAIKALQGT) are a coiled coil.

In terms of assembly, the core secretion machinery of the T3SS is composed of approximately 20 different proteins, including cytoplasmic components, a base, an export apparatus and a needle. This subunit polymerizes and forms the helical needle filament. Forms a stable heterotrimeric complex with PscE and PscG in the cytoplasm, blocking it in a monomeric state and preventing its polymerization.

It is found in the secreted. The protein resides in the cell surface. Its function is as follows. Component of the type III secretion system (T3SS), also called injectisome, which is used to inject bacterial effector proteins into eukaryotic host cells, facilitating the establishment and dissemination of infection. PscF/SctF forms the external needle filament that protrudes from the bacterial surface. This is Type 3 secretion system needle filament protein from Pseudomonas aeruginosa (strain ATCC 15692 / DSM 22644 / CIP 104116 / JCM 14847 / LMG 12228 / 1C / PRS 101 / PAO1).